The primary structure comprises 472 residues: Putative cytochrome P450 135B1 (472 aa).

Residue cysteine 388 coordinates heme. Residues 442-472 (RDVSATSQATAQGAGCPAARGGGPSRAVGSQ) form a disordered region. Residues 452 to 472 (AQGAGCPAARGGGPSRAVGSQ) show a composition bias toward low complexity.

The protein belongs to the cytochrome P450 family. Heme serves as cofactor.

The chain is Putative cytochrome P450 135B1 (cyp135B1) from Mycobacterium bovis (strain ATCC BAA-935 / AF2122/97).